Consider the following 854-residue polypeptide: MGMCSRQERIQKDIDVVIQKSRAEKDCLFADFRYSDSTFTFTYVGGPRSVSYSVHVSEDYPDNTYVSSSENDEDVLVTTEPIPVIFHRIATELRKTNDINCCLSIKSKLQKENGEESRQNSTVEEDSEGDNDSEEFYYGGQVNYDGELHKHPQLEADLSAVREIYGPHAVSLREYGAIDDVDIDLHIDVSFLDEEIAVAWEVIRTEPIIVRLHCSLTQYLNGPVPTVDVFQISTKERFGLGHQLKKIMQTFVTQQWKQSKEKSNCLHNKKLSEKKVKSPLHLFSTLRRSPSYPPPGCGKSKSKLKSEQDGISKTHKLLRRTCSSTVKTDDVCVTKSHRTFGRSLSSDPRAEQAMTAIKSHKLLNRPCPAAVKSEECLTLKSHRLLTRSCSGDPRCEHNTNLKPHKLLSRSYSSNLRMEELYGLKNHKLLSKSYSSAPKSSKTELFKEPNAEGRRLSLTSGLIGILTPSSSSSSQLAPNGAKCIPVRDRGFLVQTIEFAEQRIPVLNEYCVVCDEPHVFQNGPMLRPTVCERELCVFAFQTLGVMNEAADEIATGAQVVDLLVSMCRSALESPRKVVIFEPYPSVVDPNDPQMLAFNPRKKNYDRVMKALDSITSIREMTQAPYLEIKKQMDKQDPLAHPLLQWVISSNRSHIVKLPVNRQLKFMHTPHQFLLLSSPPAKESNFRAAKKLFGSTFAFHGSHIENWHSILRNGLVVASNTRLQLHGAMYGSGIYLSPMSSISFGYSGMNKKQKVSAKDEPASSSKSSNTSQSQKKGQQSQFLQSRNLKCIALCEVITSSDLHKHGEIWVVPNTDHVCTRFFFVYEDGQVGDANINTQEGGIHKEILRVIGNQTATG.

Disordered regions lie at residues 113–138 (NGEE…EFYY) and 291–310 (SYPP…EQDG). Over residues 123–135 (VEEDSEGDNDSEE) the composition is skewed to acidic residues. ADP-ribosylcysteine occurs at positions 332, 367, 376, and 395. Residues 617-844 (EMTQAPYLEI…QEGGIHKEIL (228 aa)) enclose the PARP catalytic domain. The tract at residues 750 to 777 (QKVSAKDEPASSSKSSNTSQSQKKGQQS) is disordered. The span at 760–777 (SSSKSSNTSQSQKKGQQS) shows a compositional bias: low complexity.

The protein belongs to the ARTD/PARP family. In terms of processing, auto-mono-ADP-ribosylated.

The catalysed reaction is L-cysteinyl-[protein] + NAD(+) = S-(ADP-D-ribosyl)-L-cysteinyl-[protein] + nicotinamide + H(+). Mono-ADP-ribosyltransferase that mediates mono-ADP-ribosylation of target proteins. In Homo sapiens (Human), this protein is Protein mono-ADP-ribosyltransferase PARP8.